Here is a 146-residue protein sequence, read N- to C-terminus: MKLHELKPAEGSRKVRNRVGRGTSSGNGKTSGRGQKGQKARSGVGLRPGFEGGQTPLFRRLPKRGFTNINAKEYTLVNLEQLNVFEDGTEVTPVVLKEAGIIRAEKSGVKVLGNGELTKKLTVKAAKFSKSAEAAITAKGGSIEVI.

The segment covering 1 to 13 (MKLHELKPAEGSR) has biased composition (basic and acidic residues). The tract at residues 1-57 (MKLHELKPAEGSRKVRNRVGRGTSSGNGKTSGRGQKGQKARSGVGLRPGFEGGQTPL) is disordered. Residues 23–35 (TSSGNGKTSGRGQ) are compositionally biased toward gly residues.

This sequence belongs to the universal ribosomal protein uL15 family. In terms of assembly, part of the 50S ribosomal subunit.

Binds to the 23S rRNA. In Streptococcus thermophilus (strain CNRZ 1066), this protein is Large ribosomal subunit protein uL15.